The chain runs to 474 residues: Polyamine oxidase 7 (474 aa).

The N-terminal stretch at 1-27 (MTKPTTMAIFLSIVLLSMAQLPSLVAG) is a signal peptide. Residues Glu61 and Arg69 each contribute to the FAD site. Asn103 and Asn150 each carry an N-linked (GlcNAc...) asparagine glycan. Residue Val261 coordinates FAD. N-linked (GlcNAc...) asparagine glycosylation occurs at Asn278. Glu454 lines the FAD pocket.

It belongs to the flavin monoamine oxidase family. Requires FAD as cofactor.

The protein resides in the secreted. The protein localises to the extracellular space. It is found in the apoplast. It catalyses the reaction spermine + O2 + H2O = 3-aminopropanal + spermidine + H2O2. It carries out the reaction N(1)-acetylspermine + O2 + H2O = 3-acetamidopropanal + spermidine + H2O2. The enzyme catalyses norspermine + O2 + H2O = norspermidine + 3-aminopropanal + H2O2. The catalysed reaction is spermidine + O2 + H2O = 3-aminopropanal + putrescine + H2O2. It catalyses the reaction N(1)-acetylspermidine + O2 + H2O = 3-acetamidopropanal + putrescine + H2O2. It carries out the reaction thermospermine + O2 + H2O = 3-aminopropanal + spermidine + H2O2. It functions in the pathway amine and polyamine degradation; spermidine degradation. The protein operates within amine and polyamine degradation; spermine degradation. Flavoenzyme involved in polyamine back-conversion. Catalyzes the oxidation of the secondary amino group of polyamines, such as spermine, spermidine and their acetyl derivatives. Substrate preference is spermine &gt; spermidine &gt; N(1)-acetylspermine &gt; N(1)-acetylspermidine &gt; norspermine &gt; thermospermine. No activity detected when putrescine is used as substrate. May play a role in producing hydrogen peroxide for secondary wall thickening through lignin formation during anther development. The polypeptide is Polyamine oxidase 7 (Oryza sativa subsp. japonica (Rice)).